We begin with the raw amino-acid sequence, 136 residues long: Large ribosomal subunit protein uL16 (136 aa).

This sequence belongs to the universal ribosomal protein uL16 family. In terms of assembly, part of the 50S ribosomal subunit.

Binds 23S rRNA and is also seen to make contacts with the A and possibly P site tRNAs. This is Large ribosomal subunit protein uL16 from Histophilus somni (strain 129Pt) (Haemophilus somnus).